A 447-amino-acid chain; its full sequence is Sulfoquinovose isomerase (447 aa).

It belongs to the SqvD family.

The catalysed reaction is 6-sulfo-beta-D-quinovose = 6-deoxy-6-sulfo-D-fructose. Functionally, part of the sulfo-TK pathway, a D-sulfoquinovose degradation pathway that produces 2-hydroxyethane-1-sulfonate (isethionate). Catalyzes the isomerization of sulfoquinovose (SQ) to 6-deoxy-6-sulfo-D-fructose (SF). This chain is Sulfoquinovose isomerase, found in Clostridium sp. (strain MSTE9).